The chain runs to 1070 residues: DNA-directed RNA polymerase subunit beta (1070 aa).

This sequence belongs to the RNA polymerase beta chain family. In terms of assembly, in plastids the minimal PEP RNA polymerase catalytic core is composed of four subunits: alpha, beta, beta', and beta''. When a (nuclear-encoded) sigma factor is associated with the core the holoenzyme is formed, which can initiate transcription.

The protein localises to the plastid. It localises to the chloroplast. The catalysed reaction is RNA(n) + a ribonucleoside 5'-triphosphate = RNA(n+1) + diphosphate. DNA-dependent RNA polymerase catalyzes the transcription of DNA into RNA using the four ribonucleoside triphosphates as substrates. This Chaetosphaeridium globosum (Charophycean green alga) protein is DNA-directed RNA polymerase subunit beta.